We begin with the raw amino-acid sequence, 171 residues long: Serine acetyltransferase (171 aa).

It belongs to the transferase hexapeptide repeat family.

Its subcellular location is the cytoplasm. It catalyses the reaction L-serine + acetyl-CoA = O-acetyl-L-serine + CoA. It functions in the pathway amino-acid biosynthesis; L-cysteine biosynthesis; L-cysteine from L-serine: step 1/2. This chain is Serine acetyltransferase (cysE), found in Helicobacter pylori (strain J99 / ATCC 700824) (Campylobacter pylori J99).